The following is a 179-amino-acid chain: Large ribosomal subunit protein uL16 (179 aa).

A disordered region spans residues Lys147–Ser179. A compositionally biased stretch (acidic residues) spans Leu156–Thr168. Residues Ser169–Ser179 are compositionally biased toward polar residues.

The protein belongs to the universal ribosomal protein uL16 family. Part of the 50S ribosomal subunit.

Functionally, binds 23S rRNA and is also seen to make contacts with the A and possibly P site tRNAs. In Prochlorococcus marinus (strain MIT 9211), this protein is Large ribosomal subunit protein uL16.